The primary structure comprises 245 residues: 8-amino-3,8-dideoxy-manno-octulosonate cytidylyltransferase (245 aa).

The protein belongs to the KdsB family.

Its subcellular location is the cytoplasm. It catalyses the reaction 8-amino-3,8-dideoxy-alpha-D-manno-octulosonate + CTP = CMP-8-amino-3,8-dideoxy-alpha-D-manno-oct-2-ulosonate + diphosphate. It functions in the pathway bacterial outer membrane biogenesis; lipopolysaccharide biosynthesis. Activates KDO8N (a required 8-carbon sugar) for incorporation into bacterial lipopolysaccharide in the Shewanella genus. The chain is 8-amino-3,8-dideoxy-manno-octulosonate cytidylyltransferase from Shewanella pealeana (strain ATCC 700345 / ANG-SQ1).